The following is a 365-amino-acid chain: tRNA(Met) cytidine acetate ligase (365 aa).

Residues 7–20 (IAEFNPFHNGHKYL), glycine 96, asparagine 152, and arginine 175 contribute to the ATP site.

It belongs to the TmcAL family.

The protein resides in the cytoplasm. The enzyme catalyses cytidine(34) in elongator tRNA(Met) + acetate + ATP = N(4)-acetylcytidine(34) in elongator tRNA(Met) + AMP + diphosphate. Functionally, catalyzes the formation of N(4)-acetylcytidine (ac(4)C) at the wobble position of elongator tRNA(Met), using acetate and ATP as substrates. First activates an acetate ion to form acetyladenylate (Ac-AMP) and then transfers the acetyl group to tRNA to form ac(4)C34. The sequence is that of tRNA(Met) cytidine acetate ligase from Streptococcus pneumoniae (strain P1031).